Reading from the N-terminus, the 141-residue chain is Relaxin-3 (141 aa).

An N-terminal signal peptide occupies residues 1 to 24 (MAMLGLLLLASWALLGALGLQAEA). Disulfide bonds link Cys34-Cys128, Cys46-Cys141, and Cys127-Cys132. The propeptide at 54–117 (ADILAHESLG…GSPGVVRGSR (64 aa)) is connecting peptide.

This sequence belongs to the insulin family. Heterodimer of a B chain and an A chain linked by two disulfide bonds. In terms of tissue distribution, high expression in the brain localized to the pons/medulla with highest levels in pars ventromedialis of the dorsal tegmental nucleus. Significant expression is also detected in the spleen, thymus, lung, testis and ovary.

It is found in the secreted. In terms of biological role, may play a role in neuropeptide signaling processes. Ligand for LGR7, relaxin-3 receptor-1 and relaxin-3 receptor-2. The protein is Relaxin-3 (Rln3) of Mus musculus (Mouse).